The following is a 457-amino-acid chain: ATP synthase subunit beta (457 aa).

Glycine 147–threonine 154 is an ATP binding site.

The protein belongs to the ATPase alpha/beta chains family. F-type ATPases have 2 components, CF(1) - the catalytic core - and CF(0) - the membrane proton channel. CF(1) has five subunits: alpha(3), beta(3), gamma(1), delta(1), epsilon(1). CF(0) has three main subunits: a(1), b(2) and c(9-12). The alpha and beta chains form an alternating ring which encloses part of the gamma chain. CF(1) is attached to CF(0) by a central stalk formed by the gamma and epsilon chains, while a peripheral stalk is formed by the delta and b chains.

The protein resides in the cell inner membrane. The catalysed reaction is ATP + H2O + 4 H(+)(in) = ADP + phosphate + 5 H(+)(out). Produces ATP from ADP in the presence of a proton gradient across the membrane. The catalytic sites are hosted primarily by the beta subunits. This is ATP synthase subunit beta from Histophilus somni (strain 2336) (Haemophilus somnus).